The following is a 126-amino-acid chain: Cystatin-like protein (126 aa).

Positions 72-76 match the Secondary area of contact motif; sequence QVVAG. Residues C94 and C115 are joined by a disulfide bond.

This sequence belongs to the cystatin family.

This Drosophila melanogaster (Fruit fly) protein is Cystatin-like protein (Cys).